A 286-amino-acid polypeptide reads, in one-letter code: Protease HtpX (286 aa).

2 helical membrane-spanning segments follow: residues 4 to 24 and 33 to 53; these read ILLF…ILSL and TGLL…SLFL. Residue His-139 coordinates Zn(2+). Glu-140 is an active-site residue. His-143 lines the Zn(2+) pocket. 2 consecutive transmembrane segments (helical) span residues 147–167 and 186–206; these read GDMV…IFVS and IYFL…SMIA. Zn(2+) is bound at residue Glu-214.

Belongs to the peptidase M48B family. It depends on Zn(2+) as a cofactor.

The protein localises to the cell inner membrane. This is Protease HtpX from Pasteurella multocida (strain Pm70).